The following is a 63-amino-acid chain: Kurtoxin-like II (63 aa).

The LCN-type CS-alpha/beta domain maps to 2 to 62; that stretch reads IDGYPVDYWN…ARIKRSGRCR (61 aa). 4 disulfides stabilise this stretch: cysteine 12–cysteine 61, cysteine 16–cysteine 37, cysteine 23–cysteine 44, and cysteine 27–cysteine 46.

The protein belongs to the long (4 C-C) scorpion toxin superfamily. Sodium channel inhibitor family. Alpha subfamily. In terms of tissue distribution, expressed by the venom gland.

It is found in the secreted. This neurotoxin acts on sodium and calcium channels. Potently inhibits native voltage-gated T-type calcium channel activity in mouse male germ cells. Also binds Cav3.1/CACNA1G, Cav3.2/CACNA1H, and Cav3.3/CACNA1I T-type calcium channels and inhibits the channels by modifying voltage-dependent gating. In addition, binds and significantly inhibits the inactivation of activated sodium channels (Nav1.2/SCN2A and Nav1.5/SCN5A). The polypeptide is Kurtoxin-like II (Parabuthus granulatus (Granulated thick-tailed scorpion)).